The chain runs to 618 residues: Transcriptional regulator CPUR_05421 (618 aa).

The segment at residues 14 to 41 (CSHLVGREIGCSRDLAGCRRCTSEGRAC) is a DNA-binding region (zn(2)-C6 fungal-type). Positions 52-87 (TRRRNRANQDVTRSALYSSNTTPQTISDQATGRPCE) are disordered. Over residues 59-81 (NQDVTRSALYSSNTTPQTISDQA) the composition is skewed to polar residues.

It localises to the nucleus. In terms of biological role, transcriptional regulator; part of the ergochrome gene cluster responsible for the typical purple-black color of the ergot sclerotia. The ergochrome gene cluster produces several ergot pigments including the yellow ergochrome secalonic acid and its derivatives, as well as the red anthraquinones endocrocin and clavorubin. This chain is Transcriptional regulator CPUR_05421, found in Claviceps purpurea (strain 20.1) (Ergot fungus).